Consider the following 511-residue polypeptide: Colicin-B (511 aa).

Positions 17–24 match the TonB box motif; that stretch reads DTMVVWPS. A run of 2 helical transmembrane segments spans residues 455–475 and 477–497; these read MASA…LIAF and LSAT…GAFI.

This sequence belongs to the channel forming colicin family.

The protein resides in the cell membrane. Its function is as follows. This colicin is a channel-forming colicin. This class of transmembrane toxins depolarize the cytoplasmic membrane, leading to dissipation of cellular energy. In terms of biological role, colicins are polypeptide toxins produced by and active against E.coli and closely related bacteria. The protein is Colicin-B (cba) of Escherichia coli.